Reading from the N-terminus, the 364-residue chain is E3 ubiquitin-protein ligase rnf146 (364 aa).

The interval 18 to 37 (KKVSGEAVPEGSGSPSSPSL) is disordered. Residues 22–34 (GEAVPEGSGSPSS) show a composition bias toward low complexity. The segment at 42 to 80 (CPICLQSCVHPVRLPCRHIFCFLCVKGASWHSKRCALCR) adopts an RING-type zinc-finger fold. The WWE domain maps to 102-178 (SATGGCGTGS…EHGRRRRMKR (77 aa)). Tyr-118, Arg-121, Trp-125, Tyr-155, Gln-164, Arg-174, and Lys-186 together coordinate a glycoprotein. 2 disordered regions span residues 217-262 (AAAE…PASS) and 279-364 (NEQE…VTKV). 2 stretches are compositionally biased toward acidic residues: residues 281–295 (QEPEEEDAEDEDDSA) and 308–322 (TSDDDEQVEDEDENE).

Its subcellular location is the cytoplasm. The protein resides in the cytosol. It is found in the nucleus. The enzyme catalyses S-ubiquitinyl-[E2 ubiquitin-conjugating enzyme]-L-cysteine + [acceptor protein]-L-lysine = [E2 ubiquitin-conjugating enzyme]-L-cysteine + N(6)-ubiquitinyl-[acceptor protein]-L-lysine.. It functions in the pathway protein modification; protein ubiquitination. Functionally, E3 ubiquitin-protein ligase that specifically binds poly-ADP-ribosylated proteins and mediates their ubiquitination and subsequent degradation. May regulate many important biological processes, such as cell survival and DNA damage response. Acts as an activator of the Wnt signaling pathway by mediating the ubiquitination of poly-ADP-ribosylated proteins. Neuroprotective protein. Protects against cell death induced by DNA damaging agents and rescues cells from G1 arrest. Promotes cell survival after gamma-irradiation. Facilitates DNA repair. This Danio rerio (Zebrafish) protein is E3 ubiquitin-protein ligase rnf146 (rnf146).